Here is a 667-residue protein sequence, read N- to C-terminus: Bifunctional polymyxin resistance protein ArnA (667 aa).

Positions 1–304 (MKAIVFAYHD…EMGIVTDVRL (304 aa)) are formyltransferase ArnAFT. H104 functions as the Proton donor; for formyltransferase activity in the catalytic mechanism. (6R)-10-formyltetrahydrofolate-binding positions include R114 and 136–140 (VKKAD). A dehydrogenase ArnADH region spans residues 314-667 (RRTRVLILGV…TAAPKDELNA (354 aa)). Residues D347 and 368–369 (DI) contribute to the NAD(+) site. UDP-alpha-D-glucuronate contacts are provided by residues A393, Y398, and 432-433 (TS). The active-site Proton acceptor; for decarboxylase activity is E434. Residues R460, N492, 526-535 (KLVDGGAQKR), and Y613 contribute to the UDP-alpha-D-glucuronate site. R619 serves as the catalytic Proton donor; for decarboxylase activity.

In the N-terminal section; belongs to the Fmt family. UDP-L-Ara4N formyltransferase subfamily. This sequence in the C-terminal section; belongs to the NAD(P)-dependent epimerase/dehydratase family. UDP-glucuronic acid decarboxylase subfamily. Homohexamer, formed by a dimer of trimers.

The enzyme catalyses UDP-alpha-D-glucuronate + NAD(+) = UDP-beta-L-threo-pentopyranos-4-ulose + CO2 + NADH. It carries out the reaction UDP-4-amino-4-deoxy-beta-L-arabinose + (6R)-10-formyltetrahydrofolate = UDP-4-deoxy-4-formamido-beta-L-arabinose + (6S)-5,6,7,8-tetrahydrofolate + H(+). It functions in the pathway nucleotide-sugar biosynthesis; UDP-4-deoxy-4-formamido-beta-L-arabinose biosynthesis; UDP-4-deoxy-4-formamido-beta-L-arabinose from UDP-alpha-D-glucuronate: step 1/3. Its pathway is nucleotide-sugar biosynthesis; UDP-4-deoxy-4-formamido-beta-L-arabinose biosynthesis; UDP-4-deoxy-4-formamido-beta-L-arabinose from UDP-alpha-D-glucuronate: step 3/3. The protein operates within bacterial outer membrane biogenesis; lipopolysaccharide biosynthesis. Functionally, bifunctional enzyme that catalyzes the oxidative decarboxylation of UDP-glucuronic acid (UDP-GlcUA) to UDP-4-keto-arabinose (UDP-Ara4O) and the addition of a formyl group to UDP-4-amino-4-deoxy-L-arabinose (UDP-L-Ara4N) to form UDP-L-4-formamido-arabinose (UDP-L-Ara4FN). The modified arabinose is attached to lipid A and is required for resistance to polymyxin and cationic antimicrobial peptides. In Yersinia pseudotuberculosis serotype IB (strain PB1/+), this protein is Bifunctional polymyxin resistance protein ArnA.